Reading from the N-terminus, the 211-residue chain is Glutathione S-transferase (211 aa).

The GST N-terminal domain maps to 3 to 87 (DNIVLYYFDA…YLSKKYNICG (85 aa)). Glutathione is bound by residues 58–59 (QV), 71–72 (QS), Asp105, Lys117, and Thr121. One can recognise a GST C-terminal domain in the interval 89 to 211 (SELNEFYADM…YITNRKESVY (123 aa)).

This sequence belongs to the GST superfamily. Homodimer. In the absence of ligands two homodimers may interact to form a tetramer.

The enzyme catalyses RX + glutathione = an S-substituted glutathione + a halide anion + H(+). Inhibited by chloroquine, cibacron blue, ferriprotoporphyrin IX (hemin) and S-hexylglutathione. Its function is as follows. Conjugation of reduced glutathione to a wide number of exogenous and endogenous hydrophobic electrophiles. May also function as a storage protein or ligandin for parasitotoxic ferriprotoporphyrin IX (hemin). The protein is Glutathione S-transferase of Plasmodium falciparum (isolate 3D7).